The sequence spans 129 residues: Bacteriohemerythrin (129 aa).

His-19, His-59, Glu-63, His-78, His-82, His-119, and Asp-124 together coordinate Fe cation.

This sequence belongs to the hemerythrin family. Monomer.

Oxygen-binding protein. May be involved in a storage mechanism or for delivery to oxygen-requiring enzymes. The oxygen-binding site contains two iron atoms. In Clostridium acetobutylicum (strain ATCC 824 / DSM 792 / JCM 1419 / IAM 19013 / LMG 5710 / NBRC 13948 / NRRL B-527 / VKM B-1787 / 2291 / W), this protein is Bacteriohemerythrin.